The sequence spans 154 residues: Ribosomal RNA large subunit methyltransferase H (154 aa).

S-adenosyl-L-methionine is bound by residues Gly103 and 122-127 (FSKLTF).

Belongs to the RNA methyltransferase RlmH family. Homodimer.

Its subcellular location is the cytoplasm. It catalyses the reaction pseudouridine(1915) in 23S rRNA + S-adenosyl-L-methionine = N(3)-methylpseudouridine(1915) in 23S rRNA + S-adenosyl-L-homocysteine + H(+). In terms of biological role, specifically methylates the pseudouridine at position 1915 (m3Psi1915) in 23S rRNA. The chain is Ribosomal RNA large subunit methyltransferase H from Caldicellulosiruptor bescii (strain ATCC BAA-1888 / DSM 6725 / KCTC 15123 / Z-1320) (Anaerocellum thermophilum).